The primary structure comprises 332 residues: Cysteine and histidine-rich domain-containing protein 1 (332 aa).

Ala-2 bears the N-acetylalanine mark. The interaction with PPP5C stretch occupies residues 2 to 77; that stretch reads ALLCYNRGCG…KPPESVKPEV (76 aa). Zn(2+) is bound by residues Cys-5, Cys-10, Cys-24, His-27, Cys-42, and Cys-43. CHORD domains follow at residues 5-64 and 157-216; these read CYNR…KGRH and CKNG…KGKH. Thr-47 carries the post-translational modification Phosphothreonine. Ser-51 is subject to Phosphoserine. Zn(2+)-binding residues include Cys-59, His-64, Cys-157, Cys-162, Cys-176, His-179, Cys-194, Cys-195, Cys-211, and His-216. The disordered stretch occupies residues 62-81; that stretch reads GRHNSEKPPESVKPEVKTTE. The span at 64 to 81 shows a compositional bias: basic and acidic residues; sequence HNSEKPPESVKPEVKTTE. The tract at residues 65–316 is interaction with HSP90AA1 and HSP90AB1; that stretch reads NSEKPPESVK…AEPMQWASLE (252 aa). Positions 227–316 constitute a CS domain; it reads VVPCRHDWHQ…AEPMQWASLE (90 aa).

Interacts with HSP90AA1, HSP90AB1, PPP5C, ROCK1 and ROCK2.

Regulates centrosome duplication, probably by inhibiting the kinase activity of ROCK2. Proposed to act as co-chaperone for HSP90. May play a role in the regulation of NOD1 via a HSP90 chaperone complex. In vitro, has intrinsic chaperone activity. This function may be achieved by inhibiting association of ROCK2 with NPM1. Plays a role in ensuring the localization of the tyrosine kinase receptor EGFR to the plasma membrane, and thus ensures the subsequent regulation of EGFR activity and EGF-induced actin cytoskeleton remodeling. Involved in stress response. Prevents tumorigenesis. The chain is Cysteine and histidine-rich domain-containing protein 1 (CHORDC1) from Pongo abelii (Sumatran orangutan).